Reading from the N-terminus, the 88-residue chain is Small ribosomal subunit protein uS17 (88 aa).

The protein belongs to the universal ribosomal protein uS17 family. As to quaternary structure, part of the 30S ribosomal subunit.

Its function is as follows. One of the primary rRNA binding proteins, it binds specifically to the 5'-end of 16S ribosomal RNA. In Maridesulfovibrio salexigens (strain ATCC 14822 / DSM 2638 / NCIMB 8403 / VKM B-1763) (Desulfovibrio salexigens), this protein is Small ribosomal subunit protein uS17.